The following is a 98-amino-acid chain: MASTLKLFMLLPVILLLLQEAYGTIDVEARGDNFNCNKREGPCSQRSLCECDPNLQLGRHSDQLWHYNLRTNRCERGGYRDNCNSHTSSGACVMACER.

The first 23 residues, 1 to 23, serve as a signal peptide directing secretion; that stretch reads MASTLKLFMLLPVILLLLQEAYG. Disulfide bonds link C36-C51, C43-C83, C49-C96, and C74-C92.

In terms of assembly, monomer. Expressed in salivary glands.

The protein localises to the secreted. Functionally, activates large conductance calcium-activated potassium channels (maxiK, KCNMA1/KCNMB), when tested at micromolar concentrations, suggesting a potential mechanism for regulating host blood supply during feeding. Shows no antiprotease activity, and does not prevent ADP-, PAF- or collagen-induced platelet aggregation. Has no effect on blood coagulation and does not inhibit the alternative or classical complement cascades. In Rhipicephalus appendiculatus (Brown ear tick), this protein is R.appendiculatus Kunitz/BPTI-like protein.